Reading from the N-terminus, the 136-residue chain is 2-hydroxyisobutanoyl-CoA mutase small subunit (136 aa).

The 129-residue stretch at 5–133 (PIRVLLAKVG…DSIRSLVAAR (129 aa)) folds into the B12-binding domain. H18 serves as a coordination point for adenosylcob(III)alamin.

It belongs to the acyl-CoA mutase small subunit family. As to quaternary structure, homotetramer composed of two large substrate-binding subunits (HcmA) and two small cobalamin-binding subunits (HcmB). Adenosylcob(III)alamin serves as cofactor.

It catalyses the reaction 2-hydroxyisobutanoyl-CoA = (3S)-3-hydroxybutanoyl-CoA. Together with HcmA, catalyzes the isomerization of 2-hydroxyisobutyryl-CoA and 3-hydroxybutyryl-CoA. Is specific for 2-hydroxyisobutyryl-CoA and (S)-3-hydroxybutyryl-CoA, and shows only very low activity with (R)-3-hydroxybutyryl-CoA, isobutyryl-CoA and butyryl-CoA. In vitro, can isomerize pivalyl-CoA and isovaleryl-CoA, with much lower efficiency. Plays a central role in the degradation of substrates bearing a tert-butyl moiety, such as the fuel oxygenate methyl tert-butyl ether (MTBE) and its metabolites. The chain is 2-hydroxyisobutanoyl-CoA mutase small subunit from Aquincola tertiaricarbonis.